The chain runs to 437 residues: MANVVVIGAQWGDEGKGKITDLLSRSADVVVRYQGGVNAGHTIVVEDKVLKLHLIPSGILYPETICLIGSGTVVDPKVMLKEIEMLIENDIDISGLQLASTAHVTMPYHRLIDQAMEKRRGEQKIGTTGRGIGPTYADKAQRNGIRVIDLLDEQKLRERLRIPLAEKNNVLQKIYKELPLDQEKVIEEYLEYGDRLRPHVVDCSRAIHQAARNRKNILFEGAQGTLLDLDHGTYPFVTSSNPVSGGACIGAGVGPTLIDRVIGVAKAYTTRVGEGPFPTELEGSLNDQLCDRGGEYGTTTGRRRRCGWFDGVIGKYAVEVNGLDCIAITKLDVLDELEEIKVCVAYQLDGQKIEYFPSSAEDFSRCKPIFKSLPGWKSSTAECKRLEDLPPSAMAYLRFLAELMEVPIAIVSLGASRDQTIVVEDPIHGPKRALLNI.

GTP is bound by residues 12 to 18 (GDEGKGK) and 40 to 42 (GHT). The active-site Proton acceptor is the D13. Mg(2+) is bound by residues D13 and G40. IMP contacts are provided by residues 13–16 (DEGK), 38–41 (NAGH), T128, R142, Q223, T238, and R302. Residue H41 is the Proton donor of the active site. 298–304 (TTTGRRR) contributes to the substrate binding site. GTP-binding positions include R304, 330–332 (KLD), and 412–414 (SLG).

Belongs to the adenylosuccinate synthetase family. In terms of assembly, homodimer. Mg(2+) serves as cofactor.

It localises to the cytoplasm. The enzyme catalyses IMP + L-aspartate + GTP = N(6)-(1,2-dicarboxyethyl)-AMP + GDP + phosphate + 2 H(+). It functions in the pathway purine metabolism; AMP biosynthesis via de novo pathway; AMP from IMP: step 1/2. Functionally, plays an important role in the de novo pathway of purine nucleotide biosynthesis. Catalyzes the first committed step in the biosynthesis of AMP from IMP. In Prochlorococcus marinus (strain MIT 9211), this protein is Adenylosuccinate synthetase.